Here is a 239-residue protein sequence, read N- to C-terminus: Transcription factor MYB10 (239 aa).

HTH myb-type domains are found at residues 11 to 63 (KSQV…INYL) and 64 to 118 (RPGL…KKRL). 2 DNA-binding regions (H-T-H motif) span residues 39–63 (WRSL…INYL) and 91–114 (WSKI…NTHL).

In terms of tissue distribution, expressed in cauline leaves and siliques.

Its subcellular location is the nucleus. Its function is as follows. Involved in metal ions homeostasis, including iron ions (Fe) acquisition, via the regulation of NAS4 and NAS2 genes expression. Necessary for plant survival in alkaline soil where iron availability is greatly restricted. Triggers tolerance to nickel (Ni) and zinc (Zn) ions. The sequence is that of Transcription factor MYB10 from Arabidopsis thaliana (Mouse-ear cress).